The chain runs to 545 residues: Glucose-6-phosphate isomerase (545 aa).

Residue E351 is the Proton donor of the active site. Active-site residues include H382 and K510.

The protein belongs to the GPI family.

The protein resides in the cytoplasm. It catalyses the reaction alpha-D-glucose 6-phosphate = beta-D-fructose 6-phosphate. The protein operates within carbohydrate biosynthesis; gluconeogenesis. Its pathway is carbohydrate degradation; glycolysis; D-glyceraldehyde 3-phosphate and glycerone phosphate from D-glucose: step 2/4. In terms of biological role, catalyzes the reversible isomerization of glucose-6-phosphate to fructose-6-phosphate. The protein is Glucose-6-phosphate isomerase of Shewanella loihica (strain ATCC BAA-1088 / PV-4).